Reading from the N-terminus, the 382-residue chain is G-box-binding factor 3 (382 aa).

Positions 1–16 (MGNSSEEPKPPTKSDK) are enriched in basic and acidic residues. 3 disordered regions span residues 1–26 (MGNSSEEPKPPTKSDKPSSPPVDQTN), 97–221 (MGSL…GVKL), and 257–285 (ERELKRERRKQSNRESARRSRLRKQAETE). The segment covering 111 to 130 (TPGTLLSIDTPTKSTGNTDN) has biased composition (polar residues). Residues 155–165 (ADEHKRSRNSS) are compositionally biased toward basic and acidic residues. A compositionally biased stretch (low complexity) spans 166–181 (ETDGSTDGSDGNTTGA). Residues 182 to 199 (DEPKLKRSREGTPTKDGK) show a composition bias toward basic and acidic residues. The span at 202–216 (VQASSFHSVSPSSGD) shows a compositional bias: polar residues. The bZIP domain maps to 259–322 (ELKRERRKQS…DKLRGANATL (64 aa)). The interval 261–280 (KRERRKQSNRESARRSRLRK) is basic motif. A leucine-zipper region spans residues 287-322 (LARKVEALTAENMALRSELNQLNEKSDKLRGANATL). A disordered region spans residues 329–382 (SEPEKRVPANMLSRVKNSGAGDKNKNQGDNDSNSTSKLHQLLDTKPRAKAVAAG). Positions 357–366 (DNDSNSTSKL) are enriched in polar residues.

The protein belongs to the bZIP family. DNA-binding heterodimer. Interacts with GBF4. Interacts with BZIP16 and BZIP68. In terms of tissue distribution, present only in dark grown leaves and roots.

It is found in the nucleus. Its function is as follows. Binds to the G-box motif (5'-CCACGTGG-3') of the rbcS-1A gene promoter. G-box and G-box-like motifs are cis-acting elements defined in promoters of certain plant genes which are regulated by such diverse stimuli as light-induction or hormone control. The chain is G-box-binding factor 3 (GBF3) from Arabidopsis thaliana (Mouse-ear cress).